We begin with the raw amino-acid sequence, 131 residues long: Interleukin-13 (131 aa).

A signal peptide spans 1–18 (MALWLTLVIALTCFGGLA). N-linked (GlcNAc...) asparagine glycans are attached at residues N39, N50, N58, and N74. 2 disulfide bridges follow: C49-C78 and C66-C92.

It belongs to the IL-4/IL-13 family. Interacts with IL13RA2.

The protein resides in the secreted. Cytokine that plays important roles in allergic inflammation and immune response to parasite infection. Synergizes with IL2 in regulating interferon-gamma synthesis. Stimulates B-cell proliferation, and activation of eosinophils, basophils, and mast cells. Plays an important role in controlling IL33 activity by modulating the production of transmembrane and soluble forms of interleukin-1 receptor-like 1/IL1RL1. Displays the capacity to antagonize Th1-driven proinflammatory immune response and downregulates synthesis of many proinflammatory cytokines including IL1, IL6, IL10, IL12 and TNF-alpha through a mechanism that partially involves suppression of NF-kappa-B. Also functions on nonhematopoietic cells, including endothelial cells where it induces vascular cell adhesion protein 1/VCAM1, which is important in the recruitment of eosinophils. Exerts its biological effects through its receptors which comprises the IL4R chain and the IL13RA1 chain, to activate JAK1 and TYK2, leading to the activation of STAT6. Aside from IL13RA1, another receptor IL13RA2 acts as a high affinity decoy for IL13 and mediates internalization and depletion of extracellular IL13. The polypeptide is Interleukin-13 (IL13) (Sus scrofa (Pig)).